The primary structure comprises 253 residues: Mediator of RNA polymerase II transcription subunit 19 (253 aa).

2 disordered regions span residues 18–49 (EQYSPKSSPRAGGAGGRSPVVARQDSSGTLKT) and 157–253 (GPLP…TQVF). Low complexity predominate over residues 21-40 (SPKSSPRAGGAGGRSPVVAR). 2 stretches are compositionally biased toward basic residues: residues 165–183 (HLKSVPTRKHKNKHKKHKY) and 220–233 (RKKRKKEKKRKKQR).

The protein belongs to the Mediator complex subunit 19 family. In terms of assembly, component of the Mediator complex.

It is found in the nucleus. Functionally, component of the Mediator complex, a coactivator involved in the regulated transcription of nearly all RNA polymerase II-dependent genes. Mediator functions as a bridge to convey information from gene-specific regulatory proteins to the basal RNA polymerase II transcription machinery. Mediator is recruited to promoters by direct interactions with regulatory proteins and serves as a scaffold for the assembly of a functional preinitiation complex with RNA polymerase II and the general transcription factors. The chain is Mediator of RNA polymerase II transcription subunit 19 (MED19) from Aedes aegypti (Yellowfever mosquito).